Consider the following 349-residue polypeptide: Sphingomyelinase D (349 aa).

Residues 1–18 (MLLSSLISLALLSSQVVA) form the signal peptide. His-52 is an active-site residue. Mg(2+) contacts are provided by Glu-72, Asp-74, and Asp-123. Positions 310 to 317 (ATNDNNPW) match the SMD-tail motif.

This sequence belongs to the sphingomyelinase D/phospholipase D family. It depends on Mg(2+) as a cofactor.

Its subcellular location is the secreted. The enzyme catalyses a sphingomyelin + H2O = an N-acylsphing-4-enine 1-phosphate + choline + H(+). In terms of biological role, catalyzes the hydrolysis of sphingomyelin. Sphingomyelinases D are produced by some spider in their venoms, but also by arthropods such as ticks, or pathogenic bacteria and fungi. They might play a role in pathogenicity through different mechanisms, such as membrane destabilization and host cell penetration, but also pulmonary inflammation and cutaneous lesions. This chain is Sphingomyelinase D, found in Uncinocarpus reesii (strain UAMH 1704).